Consider the following 2778-residue polypeptide: Probable ubiquitin carboxyl-terminal hydrolase FAF (2778 aa).

A disordered region spans residues 1 to 85; it reads MTFDTRRHTT…SQSSDDVAAS (85 aa). Over residues 10-39 the composition is skewed to low complexity; sequence TGQPGSTAPSSSSSTTSTTTTTTSPAQSAG. Positions 71 to 85 are enriched in polar residues; that stretch reads QPATDSQSSDDVAAS. Serine 924 carries the post-translational modification Phosphoserine. The tract at residues 1065–1094 is disordered; sequence GTGLASSPDSSSDSSTGSPPRPCPDMQRVE. The segment covering 1070-1082 has biased composition (low complexity); that stretch reads SSPDSSSDSSTGS. The USP domain maps to 1668–2062; the sequence is CGLKNAGATC…NAYMLFYTRC (395 aa). Cysteine 1677 (nucleophile) is an active-site residue. Catalysis depends on histidine 1986, which acts as the Proton acceptor. Disordered stretches follow at residues 2568-2632 and 2644-2691; these read VSEK…GDSN and AYTS…INGL. Composition is skewed to low complexity over residues 2614–2627 and 2644–2671; these read TPTTSSPSTAAWPA and AYTSTGSGSTSGGSAPTSALTTTAGSGA. Residues 2672-2691 show a composition bias toward polar residues; sequence NSETESSAQETTGETTINGL.

Belongs to the peptidase C19 family. Interacts with imd. In terms of processing, ubiquitinated. Ubiquitination is enhanced by the expression of imd. Eye disks and ovaries. Expressed in larval fat body.

The catalysed reaction is Thiol-dependent hydrolysis of ester, thioester, amide, peptide and isopeptide bonds formed by the C-terminal Gly of ubiquitin (a 76-residue protein attached to proteins as an intracellular targeting signal).. Functionally, ubiquitin C-terminal hydrolase involved in development and the imd/NF-kappa-B (IMD) signaling cascade. Required for eye and embryo development, and plays a role in compound eye assembly and oogenesis respectively. In the larval eye disks, cells outside the assembling facets require this protein for short-range cell interactions that prevent the mystery cells from becoming photoreceptors. Also required for nuclear migration and cellularization in early embryogenesis and could play a role in pole cell determination, development or function. Regulates the IMD signaling cascade at later stages of infection (around 6 hours post-infection) by inhibiting the expression of the antimicrobial peptides Dpt and Dro. Acts by modulating the state of imd polyubiquitination and/or stability; a function which appears to be independent of its enzymatic activity. In turn, imd enhances the polyubiquitination and stability of faf suggesting that they may form a regulatory feedback mechanism within the Imd pathway. This is Probable ubiquitin carboxyl-terminal hydrolase FAF (faf) from Drosophila melanogaster (Fruit fly).